The sequence spans 1634 residues: Phosphatidylinositol 4-phosphate 3-kinase C2 domain-containing subunit beta (1634 aa).

The interaction with GRB2 stretch occupies residues 2 to 298 (SSTQGNGEHW…YASRYGNRKN (297 aa)). Disordered stretches follow at residues 45–188 (EENR…QPSD) and 259–315 (GRGP…VGSR). Positions 87–112 (SDPTLNYNSLSPQEGPPNHSTSQGPQ) are enriched in polar residues. Residues 176–187 (GSPSSSKISQPS) are compositionally biased toward low complexity. Basic and acidic residues predominate over residues 259–270 (GRGPLDFSKDTS). One can recognise a PI3K-RBD domain in the interval 375 to 463 (EVNLKVTVLC…DIDIRLQLME (89 aa)). One can recognise a C2 PI3K-type domain in the interval 635-786 (VYATHRIPII…DSVILQIDFP (152 aa)). Positions 805 to 981 (RYEFGSLREE…QYLLAALLCC (177 aa)) constitute a PIK helical domain. Residues 1050–1328 (VPRDCSYFNS…LIESSLGSVA (279 aa)) enclose the PI3K/PI4K catalytic domain. The G-loop stretch occupies residues 1056–1062 (YFNSNAV). The catalytic loop stretch occupies residues 1192–1200 (GICDRHNDN). Residues 1211-1237 (HIDFGRFLGHAQMFGNIKRDRAPFVFT) form an activation loop region. The PX domain maps to 1365-1481 (GRISDVFLCR…TFFHPLPRDE (117 aa)). A C2 domain is found at 1504–1624 (VGGEVKLSIS…DLAQEKTGWF (121 aa)).

This sequence belongs to the PI3/PI4-kinase family. As to quaternary structure, part of a complex with ERBB2 and EGFR. Part of a complex with phosphorylated EGFR and GRB2. Interacts with phosphorylated EGFR and PDGFR, maybe indirectly. Interacts with GRB2. Ca(2+) is required as a cofactor. It depends on Mg(2+) as a cofactor. Requires Mn(2+) as cofactor. As to expression, expressed in columnar and transitional epithelia, mononuclear cells, and ganglion cells (at protein level). Widely expressed, with highest levels in thymus and placenta and lowest in peripheral blood, skeletal muscle and kidney.

It localises to the microsome. The protein localises to the cell membrane. Its subcellular location is the cytoplasm. It is found in the cytosol. The protein resides in the nucleus. It localises to the endoplasmic reticulum. The catalysed reaction is a 1,2-diacyl-sn-glycero-3-phospho-(1D-myo-inositol 4-phosphate) + ATP = a 1,2-diacyl-sn-glycero-3-phospho-(1D-myo-inositol-3,4-bisphosphate) + ADP + H(+). The enzyme catalyses a 1,2-diacyl-sn-glycero-3-phospho-(1D-myo-inositol) + ATP = a 1,2-diacyl-sn-glycero-3-phospho-(1D-myo-inositol-3-phosphate) + ADP + H(+). With respect to regulation, activated by GRB2. Its function is as follows. Phosphorylates PtdIns and PtdIns4P with a preference for PtdIns. Does not phosphorylate PtdIns(4,5)P2. May be involved in EGF and PDGF signaling cascades. The protein is Phosphatidylinositol 4-phosphate 3-kinase C2 domain-containing subunit beta (PIK3C2B) of Homo sapiens (Human).